The chain runs to 138 residues: RutC family protein UK114 (138 aa).

Belongs to the RutC family.

Functionally, molecular chaperone. Seems to fulfill an ATP-independent, HSP70-like function in protein folding. May protect essential factors of cell proliferation during heat shock. No role in calpain activation. This chain is RutC family protein UK114, found in Drosophila melanogaster (Fruit fly).